Here is a 61-residue protein sequence, read N- to C-terminus: Temporin-CDYa (61 aa).

Positions 1–22 (MFPLKKSLLLLFFLGTINFSFC) are cleaved as a signal peptide. The propeptide occupies 23-44 (EEERNAEEERRDDPEERDVAME). At L59 the chain carries Leucine amide.

It belongs to the frog skin active peptide (FSAP) family. Temporin subfamily. In terms of tissue distribution, expressed by the skin glands.

It is found in the secreted. Functionally, antimicrobial peptide. The protein is Temporin-CDYa of Rana dybowskii (Dybovsky's frog).